Reading from the N-terminus, the 366-residue chain is Cobalt-precorrin-5B C(1)-methyltransferase (366 aa).

It belongs to the CbiD family.

The catalysed reaction is Co-precorrin-5B + S-adenosyl-L-methionine = Co-precorrin-6A + S-adenosyl-L-homocysteine. It functions in the pathway cofactor biosynthesis; adenosylcobalamin biosynthesis; cob(II)yrinate a,c-diamide from sirohydrochlorin (anaerobic route): step 6/10. Catalyzes the methylation of C-1 in cobalt-precorrin-5B to form cobalt-precorrin-6A. This is Cobalt-precorrin-5B C(1)-methyltransferase from Hahella chejuensis (strain KCTC 2396).